Reading from the N-terminus, the 94-residue chain is Co-chaperonin GroES (94 aa).

Belongs to the GroES chaperonin family. Heptamer of 7 subunits arranged in a ring. Interacts with the chaperonin GroEL.

It is found in the cytoplasm. Its function is as follows. Together with the chaperonin GroEL, plays an essential role in assisting protein folding. The GroEL-GroES system forms a nano-cage that allows encapsulation of the non-native substrate proteins and provides a physical environment optimized to promote and accelerate protein folding. GroES binds to the apical surface of the GroEL ring, thereby capping the opening of the GroEL channel. The polypeptide is Co-chaperonin GroES (Tetragenococcus halophilus (Pediococcus halophilus)).